The following is a 1663-amino-acid chain: MATDGASCEPDLSRAPEDAAGAAAEAAKKEFDVDTLSKSELRMLLSVMEGELEARDLVIEALRARRKEVFIQERYGRFNLNDPFLALQRDYEAGAGDKEKKPVCTNPLSILEAVMAHCKKMQERMSAQLAAAESRQKKLEMEKLQLQALEQEHKKLAARLEEERGKNKQVVLMLVKECKQLSGKVIEEAQKLEDIMAKLEEEKKKTNELEEELSAEKRRSTEMEAQMEKQLSEFDTEREQLRAKLNREEAHTTDLKEEIDKMKKMIEQLKRGSDSKPSLSLPRKTKDRRLVSISVGTEGTVTRSVACQTDLVTESADHVKKLPLTMPVKPSTGSPLVSANAKGSVCTSATMARPGIDRQASHGDLIGSSVPAFPPPSANRIEENGPSTDSTPDPTSSTPPLPSNAAPPTTQTPGIAPQNSQAPPMHSLHSPCANASLHPGLNPRIQAARFRFQGNANDPDQNGNTTQSPPSRDMSPTSRENLVAKQLARNTVTQALSRFTSPQAGAPSRPGAPPTGDVGTHPPVGRTSLKTHGVARVDRGNPPPIPPKKPGLSQTPSPPHPQLKVIIDSSRASNTGAKVDNKTVASPPSSLPQGNRVINEDNLPKSSSPQLPPKPSIDLTVAPAGCAVSALATSQVGAWPAATPGLNQPACSDSSLVIPTTIAFCSSINPVSASSCRPGASDSLLVTASGWSPSLTPLLMSGGPAPLAGRPTLLQQAAAQGNVTLLSMLLNEEGLDINYSCEDGHSALYSAAKNGHTDCVRLLLSAEAQINAADKNGFTPLCAAAAQGHFECVELLIAYDANINHAADGGQTPLYLACKNENKECIKLLLEAGTNRSVKTTDGWTPVHAAVDTGNVDSLKLLMYHRIPACGNSFNEEESESGVFDLDGGEESPEGIFKPVVPADLINHANREGWTAAHIAASKGFKNCLEILCRHGGLEPERRDKCNRTVHDVATDDCKHLLENLNALKIPLRISVGEIEPSDYGSDDLECENTICALNIRKQTSWDDFSKAVSQALTNHFQAISSDGWWSLEDVTCNNTTDSNIGLSARSIRSITLGNVPWSVGQSFTQSPWDFMRKNKAEHITVLLSGPQEGCLSSVTYASMIPLQMMQNYLRLVEQYHNVIFHGPEGSLQDYIVHQLALCLKHRQMAAGFSCEIVRAEIDAGFSKEQLLDLFISSACLIPVKQSPSKKKIIIILENLEKSSLSELLRDFLAPLENRSTESPCTFQKGNGMSECYYFHENCFLMGTIAKACLQGSDLLVQQHFRWVQLRWDGEPMQGLLQRFLRRKVVNKFKGQAPSPCDPVCKIVDWALSVWRQLNSCLARLGTPEALLGPKYFLSCPVVPGHAQVTVKWMSKLWNGVIAPRVQEAILSRASVKRQPGFGQTTAKRHPSQGQQAVVKAALSILLNKAVLHGCPLPRAELDQHTADFKGGSFPLSIVSSYNSCNKKKGESGAWRKVNTSPRRKSGRFSLPTWNKPDLSTEGIKNKTISQLNYNRNASLSKQKSLENDLSLTLNLDQRLSLGSDDEADLVKELQSMCSSKSESDISKIADSRDDLRMFDSSGNNPLLSATINNLRMPVSQKEVSPLSSHQTTECSNSKSKTELGVSRVKSFLPVPRSKVTLCSQNTKRSSSSSNTRQIEINNNSKKENWNLHKNEHLDKPNK.

4 disordered regions span residues 1 to 23 (MATDGASCEPDLSRAPEDAAGAA), 203 to 222 (KKKTNELEEELSAEKRRSTE), 358 to 440 (RQAS…LHPG), and 454 to 479 (GNANDPDQNGNTTQSPPSRDMSPTSR). The stretch at 119-276 (KKMQERMSAQ…EQLKRGSDSK (158 aa)) forms a coiled coil. Residues 386 to 396 (PSTDSTPDPTS) show a composition bias toward low complexity. Residues 411 to 422 (QTPGIAPQNSQA) are compositionally biased toward polar residues. The residue at position 498 (Arg-498) is an Asymmetric dimethylarginine. Positions 499-616 (FTSPQAGAPS…SSPQLPPKPS (118 aa)) are disordered. Residues 583 to 593 (TVASPPSSLPQ) show a composition bias toward polar residues. 6 ANK repeats span residues 709-739 (GRPTLLQQAAAQGNVTLLSMLLNEEGLDINY), 743-772 (DGHSALYSAAKNGHTDCVRLLLSAEAQINA), 776-805 (NGFTPLCAAAAQGHFECVELLIAYDANINH), 809-838 (GGQTPLYLACKNENKECIKLLLEAGTNRSV), 842-871 (DGWTPVHAAVDTGNVDSLKLLMYHRIPACG), and 912-942 (EGWTAAHIAASKGFKNCLEILCRHGGLEPER). A disordered region spans residues 1446 to 1477 (NKKKGESGAWRKVNTSPRRKSGRFSLPTWNKP). Phosphoserine is present on Ser-1524. 2 disordered regions span residues 1580-1602 (SQKEVSPLSSHQTTECSNSKSKT) and 1618-1663 (SKVT…KPNK). Positions 1582–1599 (KEVSPLSSHQTTECSNSK) are enriched in polar residues. The span at 1624 to 1638 (SQNTKRSSSSSNTRQ) shows a compositional bias: low complexity. The span at 1645 to 1663 (SKKENWNLHKNEHLDKPNK) shows a compositional bias: basic and acidic residues.

In terms of assembly, interacts with CTTN/cortactin SH3 domain. Interacts with STRN, STRN4/zinedin and MOB4/phocein; this interactions mediate the association with the STRIPAK core complex and may regulate dendritic spine distribution of the STRIPAK complex in hippocampal neurons. Activation of glutamate receptors weakens the interaction with STRN and STRN4.

The protein localises to the cytoplasm. The protein resides in the cell cortex. Its subcellular location is the cell projection. It localises to the dendritic spine. In terms of biological role, regulates the dendritic spine distribution of CTTN/cortactin in hippocampal neurons, and thus controls dendritic spinogenesis and dendritic spine maintenance. Associates with the striatin-interacting phosphatase and kinase (STRIPAK) core complex to regulate dendritic spine distribution of the STRIPAK complex in hippocampal neurons. The protein is Cortactin-binding protein 2 (CTTNBP2) of Colobus guereza (Mantled guereza).